The sequence spans 1156 residues: MACPWQFLFKIKSQKVDLATELDINNNVGKFYQPPSSPVTQDDPKRHSPGKHGNESPQPLTGTVKTSPESLSKLDAPPSACPRHVRIKNWGSGVTFQDTLHQKAKGDLSCKSKSCLASIMNPKSLTIGPRDKPTPPDELLPQAIEFVNQYYGSFKEAKIEEHLARVEAVTKEIETTGTYQLTGDELIFATKQAWRNAPRCIGRIQWSNLQVFDARSCSTAQEMFEHICRHVRYATNNGNIRSAITVFPQRSDGKHDFRVWNAQLIRYAGYQMPDGSIRGDPANVEFTQLCIDLGWKPKYGRFDVLPLVLQADGRDPELFEIPPDLVLEVPMEHPRYEWFRELELKWYALPAVANMLLEVGGLEFPGCPFNGWYMGTEVGVRDFCDAQRYNILEEVGRRMGLETHKVASLWKDRAVVEINVAVLHSFQKQNVTIMDHHSAAESFMKYMQNEYRSRGGCPADWIWLVPPISGSITPVFHQEMLNYVLSPFYYYQVEPWKTHVWQDERRRPQRREIRFKVLVKAVFFASVLMHKAMASRVRATILFATETGRSETLAQDLGALFSCAFNPKVLCMDQYQLSHLEEEQLLLVVTSTFGNGDSPGNGEKLKKSLLMLKELTNTFRYAVFGLGSSMYPQFCAFAHDIDQKLSQLGASQLAPTGEGDELSGQEEAFRSWAVQTFKAACETFDVSGKHHIEIPKLYTSNVTWDPQHYRLVQDSEPLDLNKALSSMHAKHVFTMRLKSQQNLQSPKSSRTTLLVELSCEGSQAPSYLPGEHLGVFPCNQPALVQGILERVVDGPAPHQPVRLETLCENGSYWVKDKRLPPCSLSQALTYFLDITTPPTQLLLRKLAQLATEEAEKQRLETLCQPSDYNKWKFTNSPTFLEVLEEFPSLRVSASFLLSQLPILKPRYYSISSSRDLTPTEIHLTVAVLTYRTRDGQGPLHHGVCSTWLSSLKPQDPVPCFVRSASGFQLPEDRSRPCILIGPGTGIAPFRSFWQQRLHEAEHKGLQGGRMTLVFGCRRPEEDHLYWEEMLEMARKGVLHEVHTAYSRLPDQPKVYVQDILRQRLAGEVLRVLHEEQGHLYVCGDVRMARDVARTLKQLMATALSLNEEQVEDYFFQLKNQKRYHEDIFGAVFPYEVKKDGAAGLPSNPRAPGAHRS.

The DINNN-motif; mediates interaction with SPSB1, SPSB2 and SPSB4 motif lies at 23 to 27 (DINNN). Positions 27–84 (NVGKFYQPPSSPVTQDDPKRHSPGKHGNESPQPLTGTVKTSPESLSKLDAPPSACPRH) are disordered. Polar residues predominate over residues 55–70 (ESPQPLTGTVKTSPES). Residues Cys-110 and Cys-115 each contribute to the Zn(2+) site. Ser-118 is a binding site for (6R)-L-erythro-5,6,7,8-tetrahydrobiopterin. Cys-200 is a binding site for heme b. L-arginine-binding residues include Gln-263, Trp-372, Tyr-373, and Glu-377. 4 residues coordinate (6R)-L-erythro-5,6,7,8-tetrahydrobiopterin: Arg-381, Ile-462, Trp-463, and Phe-476. Tyr-491 is a heme b binding site. Residues 515 to 535 (FKVLVKAVFFASVLMHKAMAS) are calmodulin-binding. Residues 539 to 677 (ATILFATETG…AFRSWAVQTF (139 aa)) form the Flavodoxin-like domain. Thr-545, Glu-546, Thr-547, Arg-549, and Ser-550 together coordinate FMN. The residue at position 575 (Tyr-575) is a Phosphotyrosine. FMN contacts are provided by Ser-591, Thr-592, Ser-628, Cys-635, Glu-661, and Gln-665. In terms of domain architecture, FAD-binding FR-type spans 730-970 (KHVFTMRLKS…VRSASGFQLP (241 aa)). Arg-750 lines the NADP(+) pocket. FAD is bound by residues His-772, Arg-906, Tyr-908, Ser-909, Thr-924, and Ala-926. Residue Thr-929 coordinates NADP(+). Tyr-930, Val-943, Cys-944, and Ser-945 together coordinate FAD. NADP(+) is bound by residues Thr-984, Arg-1017, Ser-1046, Arg-1047, Lys-1053, Tyr-1055, Gln-1057, and Asp-1090.

The protein belongs to the NOS family. As to quaternary structure, homodimer. Interacts with NHERF1. Interacts with GAPDH; induced by oxidatively-modified low-densitity lipoprotein (LDL(ox)). Interacts with S100A8 and S100A9 to form the iNOS-S100A8/9 transnitrosylase complex. Interacts with SPSB1, SPSB2 and SPSB4. Interacts with ELOC and CUL5 in the presence of SPSB1 or SPSB2 or SPSB4. Forms a complex with ASL, ASS1 and HSP90AA1; the complex regulates cell-autonomous L-arginine synthesis and citrulline recycling while channeling extracellular L-arginine to nitric oxide synthesis pathway. Heme b serves as cofactor. Requires FAD as cofactor. FMN is required as a cofactor. The cofactor is (6R)-L-erythro-5,6,7,8-tetrahydrobiopterin. Polyubiquitinated; mediated by SPSB1, SPSB2 and SPSB4, leading to proteasomal degradation.

It localises to the cytoplasm. It is found in the cytosol. The enzyme catalyses 2 L-arginine + 3 NADPH + 4 O2 + H(+) = 2 L-citrulline + 2 nitric oxide + 3 NADP(+) + 4 H2O. Regulated by calcium/calmodulin. Functionally, produces nitric oxide (NO) which is a messenger molecule with diverse functions throughout the body. In macrophages, NO mediates tumoricidal and bactericidal actions. Also has nitrosylase activity and mediates cysteine S-nitrosylation of cytoplasmic target proteins such PTGS2/COX2. As component of the iNOS-S100A8/9 transnitrosylase complex involved in the selective inflammatory stimulus-dependent S-nitrosylation of GAPDH implicated in regulation of the GAIT complex activity and probably multiple targets including ANXA5, EZR, MSN and VIM. Involved in inflammation, enhances the synthesis of pro-inflammatory mediators such as IL6 and IL8. The sequence is that of Nitric oxide synthase, inducible (NOS2) from Bos taurus (Bovine).